A 95-amino-acid chain; its full sequence is Large ribosomal subunit protein uL23 (95 aa).

This sequence belongs to the universal ribosomal protein uL23 family. In terms of assembly, part of the 50S ribosomal subunit. Contacts protein L29, and trigger factor when it is bound to the ribosome.

Functionally, one of the early assembly proteins it binds 23S rRNA. One of the proteins that surrounds the polypeptide exit tunnel on the outside of the ribosome. Forms the main docking site for trigger factor binding to the ribosome. This is Large ribosomal subunit protein uL23 from Desulfotalea psychrophila (strain LSv54 / DSM 12343).